The chain runs to 634 residues: CREB-regulated transcription coactivator 1 (634 aa).

Phosphoserine is present on residues S64 and S113. Disordered stretches follow at residues 110–174 (RLGS…GSQD), 191–221 (TTSE…VPGI), 258–331 (LPTP…TLSP), and 357–479 (QAGS…HTST). Residue T149 is modified to Phosphothreonine. Position 151 is a phosphoserine; by SIK1 and SIK2 (S151). Residues 151 to 174 (SDSALHQSTMTPTQPESFSSGSQD) show a composition bias toward polar residues. Phosphothreonine is present on T161. The segment covering 194–208 (EADKNLSKQAWDTKK) has biased composition (basic and acidic residues). Positions 242–258 (TGGSLPDLTNIHFPSPL) match the Nuclear export signal motif. Polar residues-rich tracts occupy residues 271-283 (ALSS…NLAA), 296-305 (GMSTPGSSPQ), and 314-331 (LSLS…TLSP). The segment covering 362 to 397 (QPPPQPQPPPPPPPASQQPPPPPPPQAPVRLPPGGP) has biased composition (pro residues). Over residues 446-479 (QYRTSAGSPANQSPTSPVSNQGFSPGSSPQHTST) the composition is skewed to polar residues.

It belongs to the TORC family. In terms of assembly, binds, as a tetramer, through its N-terminal region, with the bZIP domain of CREB1. 'Arg-314' in the bZIP domain of CREB1 is essential for this interaction. Interaction, via its C-terminal, with TAF4, enhances recruitment of TAF4 to CREB1. Interacts with 14-3-3 proteins, including YWHAE/14-3-3 epsilon. Interacts with calmodulin-dependent catalytic subunit PPP3CA/calcineurin A. As to quaternary structure, (Microbial infection) Interacts with HTLV1 Tax. In terms of processing, phosphorylation/dephosphorylation states of Ser-151 are required for regulating transduction of CREB activity. TORCs are inactive when phosphorylated, and active when dephosphorylated at this site. This primary site of phosphorylation is mediated by SIKs (SIK1 and SIK2), is regulated by cAMP and calcium levels and is dependent on the phosphorylation of SIKs by LKB1. In terms of tissue distribution, highly expressed in adult and fetal brain. Located to specific regions such as the prefrontal cortex and cerebellum. Very low expression in other tissues such as heart, spleen, lung, skeletal muscle, salivary gland, ovary and kidney.

It localises to the cytoplasm. The protein localises to the nucleus. Its function is as follows. Transcriptional coactivator for CREB1 which activates transcription through both consensus and variant cAMP response element (CRE) sites. Acts as a coactivator, in the SIK/TORC signaling pathway, being active when dephosphorylated and acts independently of CREB1 'Ser-133' phosphorylation. Enhances the interaction of CREB1 with TAF4. Regulates the expression of specific CREB-activated genes such as the steroidogenic gene, StAR. Potent coactivator of PGC1alpha and inducer of mitochondrial biogenesis in muscle cells. In the hippocampus, involved in late-phase long-term potentiation (L-LTP) maintenance at the Schaffer collateral-CA1 synapses. May be required for dendritic growth of developing cortical neurons. In concert with SIK1, regulates the light-induced entrainment of the circadian clock. In response to light stimulus, coactivates the CREB-mediated transcription of PER1 which plays an important role in the photic entrainment of the circadian clock. (Microbial infection) Plays a role of coactivator for TAX activation of the human T-cell leukemia virus type 1 (HTLV-1) long terminal repeats (LTR). In Homo sapiens (Human), this protein is CREB-regulated transcription coactivator 1.